The chain runs to 428 residues: Elongation factor 1-alpha (428 aa).

A tr-type G domain is found at 5-225; that stretch reads KPILNVAFIG…DAFQPPEKPT (221 aa). A G1 region spans residues 14–21; it reads GHVDAGKS. 14–21 is a binding site for GTP; sequence GHVDAGKS. S21 is a Mg(2+) binding site. The interval 70 to 74 is G2; the sequence is GVTID. The interval 91-94 is G3; that stretch reads DCPG. Residues 91–95 and 149–152 each bind GTP; these read DCPGH and NKMD. The tract at residues 149 to 152 is G4; sequence NKMD. Positions 189 to 191 are G5; sequence ASL.

This sequence belongs to the TRAFAC class translation factor GTPase superfamily. Classic translation factor GTPase family. EF-Tu/EF-1A subfamily.

It is found in the cytoplasm. The catalysed reaction is GTP + H2O = GDP + phosphate + H(+). Its function is as follows. GTP hydrolase that promotes the GTP-dependent binding of aminoacyl-tRNA to the A-site of ribosomes during protein biosynthesis. The protein is Elongation factor 1-alpha of Methanococcus maripaludis (strain C7 / ATCC BAA-1331).